A 315-amino-acid chain; its full sequence is tRNA-dihydrouridine(16) synthase (315 aa).

Residues 7–9 and glutamine 68 contribute to the FMN site; that span reads PME. The active-site Proton donor is the cysteine 98. Residues lysine 139, 200 to 202, and 224 to 225 contribute to the FMN site; these read NGE and GR.

It belongs to the Dus family. DusC subfamily. The cofactor is FMN.

It catalyses the reaction 5,6-dihydrouridine(16) in tRNA + NADP(+) = uridine(16) in tRNA + NADPH + H(+). The enzyme catalyses 5,6-dihydrouridine(16) in tRNA + NAD(+) = uridine(16) in tRNA + NADH + H(+). Its function is as follows. Catalyzes the synthesis of 5,6-dihydrouridine (D), a modified base found in the D-loop of most tRNAs, via the reduction of the C5-C6 double bond in target uridines. DusC specifically modifies U16 in tRNAs. The polypeptide is tRNA-dihydrouridine(16) synthase (Escherichia coli (strain K12)).